The primary structure comprises 65 residues: Vespid chemotactic peptide 5h (65 aa).

The first 23 residues, 1-23 (MKYNIVFLFAIIASLACLQLTFA), serve as a signal peptide directing secretion. AXPX repeat units follow at residues 23–26 (AAPA), 27–30 (ASPL), 31–34 (ANPG), 35–38 (ASPD), 39–42 (AAPN), 43–46 (ADPL), and 47–50 (ADPF). Positions 24–49 (APAASPLANPGASPDAAPNADPLADP) are excised as a propeptide. At Leu62 the chain carries Leucine amide.

Belongs to the MCD family. Crabrolin subfamily. In terms of tissue distribution, expressed by the venom gland.

Its subcellular location is the secreted. Its function is as follows. Shows antimicrobial activity against the Gram-negative bacteria E.coli ATCC 25922 (MIC=30 ug/ml), the Gram-positive bacteria S.aureus ATCC 2592 (MIC=5 ug/ml) and the fungus C.albicans ATCC 2002 (MIC=25 ug/ml). Acts as a mast cell degranulating peptide. Its mast cell degranulation activity may be related to the activation of G-protein coupled receptors in mast cells as well as interaction with other proteins located in cell endosomal membranes in the mast cells. Induces the chemotaxis of neutrophils. This is Vespid chemotactic peptide 5h from Vespa magnifica (Hornet).